The following is a 380-amino-acid chain: MKKPIGILSPGVALGTAGGAMSSKFFLMALATFFSFAQVVIEANSWWSLGMNNPVQMSEVHIIGAQPLCSQLAGLSQGQKKLCHLYQDHMQYIGEGAKTGIKECQYQFRHRRWNCSTVDNTSVFGRVMQIGSRETAFTYAVSAAGVVNAMSRACREGELSTCGCSRAARPKDLPRDWLWGGCGDNIDYGYRFAKEFVDARERERIHAKGSYESARILMNLHNNEAGRRTVYNLADVACKCHGVSGSCSLKTCWLQLADFRKVGDALKEKYDSAAAMRLNSRGKLVQVNSRFNSPTTQDLVYIDPSPDYCVRNESTGSLGTQGRLCNKTSEGMDGCELMCCGRGYDQFKTVQTERCHCKFHWCCYVKCKKCTEIVDQFVCK.

The N-terminal stretch at 1 to 37 (MKKPIGILSPGVALGTAGGAMSSKFFLMALATFFSFA) is a signal peptide. A propeptide spanning residues 38–61 (QVVIEANSWWSLGMNNPVQMSEVH) is cleaved from the precursor. A disulfide bridge links Cys-104 with Cys-115. Residues Asn-114 and Asn-120 are each glycosylated (N-linked (GlcNAc...) asparagine). 10 cysteine pairs are disulfide-bonded: Cys-154–Cys-162, Cys-164–Cys-182, Cys-238–Cys-252, Cys-240–Cys-247, Cys-309–Cys-340, Cys-325–Cys-335, Cys-339–Cys-379, Cys-355–Cys-370, Cys-357–Cys-367, and Cys-362–Cys-363. A lipid anchor (O-palmitoleoyl serine; by PORCN) is attached at Ser-244. 2 N-linked (GlcNAc...) asparagine glycosylation sites follow: Asn-312 and Asn-326.

The protein belongs to the Wnt family. Forms a soluble 1:1 complex with AFM; this prevents oligomerization and is required for prolonged biological activity. The complex with AFM may represent the physiological form in body fluids. Homooligomer; disulfide-linked, leading to inactivation (in vitro). Interacts with PORCN. Interacts with WLS. Interacts with glypican GCP3. Interacts with PKD1 (via extracellular domain). Interacts with TMEM67. Post-translationally, glycosylation is necessary for secretion but not for activity. In terms of processing, palmitoleoylation is required for efficient binding to frizzled receptors. Depalmitoleoylation leads to Wnt signaling pathway inhibition. Proteolytic processing by TIKI1 and TIKI2 promotes oxidation and formation of large disulfide-bond oligomers, leading to inactivation of WNT5A.

It localises to the secreted. It is found in the extracellular space. Its subcellular location is the extracellular matrix. Its function is as follows. Ligand for members of the frizzled family of seven transmembrane receptors. Can activate or inhibit canonical Wnt signaling, depending on receptor context. In the presence of FZD4, activates beta-catenin signaling. In the presence of ROR2, inhibits the canonical Wnt pathway by promoting beta-catenin degradation through a GSK3-independent pathway which involves down-regulation of beta-catenin-induced reporter gene expression. Suppression of the canonical pathway allows chondrogenesis to occur and inhibits tumor formation. Stimulates cell migration. Decreases proliferation, migration, invasiveness and clonogenicity of carcinoma cells and may act as a tumor suppressor. Mediates motility of melanoma cells. Required during embryogenesis for extension of the primary anterior-posterior axis and for outgrowth of limbs and the genital tubercle. Inhibits type II collagen expression in chondrocytes. This chain is Protein Wnt-5a (Wnt5a), found in Rattus norvegicus (Rat).